The chain runs to 215 residues: Peptide methionine sulfoxide reductase MsrA (215 aa).

C58 is an active-site residue.

It belongs to the MsrA Met sulfoxide reductase family.

The enzyme catalyses L-methionyl-[protein] + [thioredoxin]-disulfide + H2O = L-methionyl-(S)-S-oxide-[protein] + [thioredoxin]-dithiol. The catalysed reaction is [thioredoxin]-disulfide + L-methionine + H2O = L-methionine (S)-S-oxide + [thioredoxin]-dithiol. Its function is as follows. Has an important function as a repair enzyme for proteins that have been inactivated by oxidation. Catalyzes the reversible oxidation-reduction of methionine sulfoxide in proteins to methionine. The protein is Peptide methionine sulfoxide reductase MsrA of Pseudomonas savastanoi pv. phaseolicola (strain 1448A / Race 6) (Pseudomonas syringae pv. phaseolicola (strain 1448A / Race 6)).